The sequence spans 256 residues: 5'-nucleotidase SurE (256 aa).

Residues Asp8, Asp9, Ser40, and Asn92 each coordinate a divalent metal cation.

The protein belongs to the SurE nucleotidase family. It depends on a divalent metal cation as a cofactor.

Its subcellular location is the cytoplasm. The enzyme catalyses a ribonucleoside 5'-phosphate + H2O = a ribonucleoside + phosphate. Nucleotidase that shows phosphatase activity on nucleoside 5'-monophosphates. The chain is 5'-nucleotidase SurE from Sinorhizobium fredii (strain NBRC 101917 / NGR234).